The following is a 614-amino-acid chain: Protein B602L (614 aa).

Tandem repeats lie at residues 161 to 164 (CAST), 165 to 168 (NADT), 169 to 172 (SAST), 173 to 176 (NADT), 177 to 180 (SAST), 181 to 184 (NASI), 185 to 188 (NADT), 189 to 192 (NVDT), 193 to 196 (CAST), 197 to 200 (NAST), 201 to 204 (NVDT), 205 to 208 (NASI), 209 to 212 (NAST), 213 to 216 (NAST), 217 to 220 (NVDT), 221 to 224 (NAST), 225 to 228 (NASI), 229 to 232 (NADT), 233 to 236 (NVDT), 237 to 240 (CAST), 241 to 244 (NAST), 245 to 248 (NVDT), 249 to 252 (NASI), 253 to 256 (NAST), 257 to 260 (NAST), 261 to 264 (NVDT), 265 to 268 (NADI), 269 to 272 (NANT), 273 to 276 (NADI), 277 to 280 (NANI), and 281 to 284 (NANT). The tract at residues 161–284 (CASTNADTSA…DINANINANT (124 aa)) is 28 X 4 AA tandem repeats of [CNS]-[AV]-[DNS]-[IT].

Belongs to the asfivirus B602L family.

It localises to the host cytoplasm. Its function is as follows. Plays an essential role in the assembly of the icosahedral capsid of the virus. Allows the assembly of 3 molecules of hexon protein p72 and formation of a thermostable trimer. The protein is Protein B602L of African swine fever virus (isolate Tick/Malawi/Lil 20-1/1983) (ASFV).